We begin with the raw amino-acid sequence, 209 residues long: Large ribosomal subunit protein bL21m (209 aa).

The transit peptide at 1 to 43 directs the protein to the mitochondrion; that stretch reads MAAAIAASALPGAFGRLVSVCSRSILASQGSGSASLWSASRRF.

The protein belongs to the bacterial ribosomal protein bL21 family. Component of the mitochondrial ribosome large subunit (39S) which comprises a 16S rRNA and about 50 distinct proteins.

The protein localises to the mitochondrion. The protein is Large ribosomal subunit protein bL21m (Mrpl21) of Mus musculus (Mouse).